The sequence spans 299 residues: Pantothenate synthetase (299 aa).

41-48 serves as a coordination point for ATP; sequence MGALHEGH. H48 functions as the Proton donor in the catalytic mechanism. Q72 contributes to the (R)-pantoate binding site. Residue Q72 participates in beta-alanine binding. 158–161 is an ATP binding site; that stretch reads GQKD. A (R)-pantoate-binding site is contributed by Q164. ATP-binding positions include V187 and 195–198; that span reads MSSR.

This sequence belongs to the pantothenate synthetase family. Homodimer.

The protein localises to the cytoplasm. The catalysed reaction is (R)-pantoate + beta-alanine + ATP = (R)-pantothenate + AMP + diphosphate + H(+). It functions in the pathway cofactor biosynthesis; (R)-pantothenate biosynthesis; (R)-pantothenate from (R)-pantoate and beta-alanine: step 1/1. Catalyzes the condensation of pantoate with beta-alanine in an ATP-dependent reaction via a pantoyl-adenylate intermediate. The protein is Pantothenate synthetase of Acidobacterium capsulatum (strain ATCC 51196 / DSM 11244 / BCRC 80197 / JCM 7670 / NBRC 15755 / NCIMB 13165 / 161).